Here is a 67-residue protein sequence, read N- to C-terminus: Protein AaeX (67 aa).

2 consecutive transmembrane segments (helical) span residues 3–23 (LFPV…ELIL) and 43–63 (FVWH…YLIS).

Belongs to the AaeX family.

The protein localises to the cell membrane. This is Protein AaeX from Enterobacter sp. (strain 638).